The following is a 304-amino-acid chain: Probable aspartoacylase (304 aa).

The Zn(2+) site is built by His-13 and Glu-16. Substrate is bound by residues Arg-55 and 62-63; that span reads NR. Residue His-105 participates in Zn(2+) binding. Substrate-binding residues include Glu-163 and Tyr-273.

This sequence belongs to the AspA/AstE family. Aspartoacylase subfamily. The cofactor is Zn(2+).

It catalyses the reaction an N-acyl-L-aspartate + H2O = a carboxylate + L-aspartate. The sequence is that of Probable aspartoacylase from Prochlorococcus marinus (strain MIT 9313).